A 757-amino-acid chain; its full sequence is Nitrogen fixation protein FixI (757 aa).

Topologically, residues 1–121 are cytoplasmic; sequence MSCCASSAAI…GEEEGDDLLK (121 aa). The HMA domain maps to 37–107; the sequence is RQTELSVPNA…AIAERGYQTH (71 aa). Residues cysteine 48 and cysteine 51 each coordinate a metal cation. The helical transmembrane segment at 122 to 143 threads the bilayer; the sequence is QLILAVAVSGFAATNIMLLSVS. The Extracellular segment spans residues 144–158; it reads VWSGADAATRDLFHW. A helical membrane pass occupies residues 159-178; that stretch reads ISALIAGPALIYAGRFFYKS. Residues 179-185 are Cytoplasmic-facing; that stretch reads AWNAIRH. A helical transmembrane segment spans residues 186-206; the sequence is GRTNMDVPIALAVSLSYGMSL. Topologically, residues 207–218 are extracellular; it reads HETIGHGEHAWF. Residues 219–239 traverse the membrane as a helical segment; sequence DASVTLLFFLLIGRTLDHMMR. Residues 240–368 are Cytoplasmic-facing; sequence GRARTAISGL…RARYRRIADR (129 aa). Residues 369-391 traverse the membrane as a helical segment; that stretch reads AARYYSPAVHLLALLTFVGWMLV. Over 392–398 the chain is Extracellular; it reads EGDVRHA. Residues 399-416 form a helical membrane-spanning segment; sequence MLVAVAVLIITCPCALGL. Residues 417–688 are Cytoplasmic-facing; it reads AVPVVQVVAA…ETSRHAGQLI (272 aa). Residue aspartate 454 is the 4-aspartylphosphate intermediate of the active site. 2 residues coordinate Mg(2+): aspartate 634 and aspartate 638. A helical transmembrane segment spans residues 689 to 708; it reads RQNFALAIGYNVIAVPIAIL. Residues 709-713 lie on the Extracellular side of the membrane; sequence GYATP. A helical transmembrane segment spans residues 714–732; sequence LVAAVAMSSSSLVVVFNAL. Residues 733 to 757 are Cytoplasmic-facing; that stretch reads RLKRSLAAGRGATPGTLIHSGAVTS.

Belongs to the cation transport ATPase (P-type) (TC 3.A.3) family. Type IB subfamily.

It is found in the cell membrane. The catalysed reaction is ATP + H2O = ADP + phosphate + H(+). Its function is as follows. FixI is a pump of a specific cation involved in symbiotic nitrogen fixation. The four proteins FixG, FixH, FixI, and FixS may participate in a membrane-bound complex coupling the FixI cation pump with a redox process catalyzed by FixG. This chain is Nitrogen fixation protein FixI (fixI), found in Rhizobium meliloti (strain 1021) (Ensifer meliloti).